A 92-amino-acid chain; its full sequence is Small ribosomal subunit protein uS19 (92 aa).

This sequence belongs to the universal ribosomal protein uS19 family.

Protein S19 forms a complex with S13 that binds strongly to the 16S ribosomal RNA. This chain is Small ribosomal subunit protein uS19, found in Bacillus licheniformis (strain ATCC 14580 / DSM 13 / JCM 2505 / CCUG 7422 / NBRC 12200 / NCIMB 9375 / NCTC 10341 / NRRL NRS-1264 / Gibson 46).